A 98-amino-acid polypeptide reads, in one-letter code: NADH-ubiquinone oxidoreductase chain 4L (98 aa).

3 helical membrane passes run 1-21 (MSMVYINIFLAFTMSLMGLLM), 29-49 (SLLCLEGMMLSLFIMMAVAIL), and 61-81 (IILLVFAACEAALGLSLLVMV).

The protein belongs to the complex I subunit 4L family. In terms of assembly, core subunit of respiratory chain NADH dehydrogenase (Complex I) which is composed of 45 different subunits.

It is found in the mitochondrion inner membrane. It catalyses the reaction a ubiquinone + NADH + 5 H(+)(in) = a ubiquinol + NAD(+) + 4 H(+)(out). In terms of biological role, core subunit of the mitochondrial membrane respiratory chain NADH dehydrogenase (Complex I) which catalyzes electron transfer from NADH through the respiratory chain, using ubiquinone as an electron acceptor. Part of the enzyme membrane arm which is embedded in the lipid bilayer and involved in proton translocation. The polypeptide is NADH-ubiquinone oxidoreductase chain 4L (MT-ND4L) (Puma concolor (Mountain lion)).